Here is a 1191-residue protein sequence, read N- to C-terminus: Major DNA-binding protein (1191 aa).

A Required for filament formation motif is present at residues 820-821 (FW). Disordered regions lie at residues 1122–1146 (TAAG…AADE) and 1168–1191 (AGLI…RSRL). The segment covering 1127 to 1142 (AAGGGGSATEGGGGGA) has biased composition (gly residues). The required for nuclear localization stretch occupies residues 1173–1191 (GDDVRGDDEFELPSKRSRL).

The protein belongs to the herpesviridae major DNA-binding protein family. In terms of assembly, homooligomers. Forms double-helical filaments necessary for the formation of replication compartments within the host nucleus. Interacts with the origin-binding protein. Interacts with the helicase primase complex; this interaction stimulates primer synthesis activity of the helicase-primase complex. Interacts with the DNA polymerase. Interacts with the alkaline exonuclease; this interaction increases its nuclease processivity.

It is found in the host nucleus. In terms of biological role, single-stranded DNA-binding protein required for DNA replication. Functionally, plays several crucial roles in viral infection. Participates in the opening of the viral DNA origin to initiate replication by interacting with the origin-binding protein. May disrupt loops, hairpins and other secondary structures present on ssDNA to reduce and eliminate pausing of viral DNA polymerase at specific sites during elongation. Promotes viral DNA recombination by performing strand-transfer, characterized by the ability to transfer a DNA strand from a linear duplex to a complementary single-stranded DNA circle. Can also catalyze the renaturation of complementary single strands. Additionally, reorganizes the host cell nucleus, leading to the formation of prereplicative sites and replication compartments. This process is driven by the protein which can form double-helical filaments in the absence of DNA. This Mus musculus (Mouse) protein is Major DNA-binding protein.